A 153-amino-acid chain; its full sequence is Large ribosomal subunit protein uL15 (153 aa).

Positions 21-41 (RGIGSGKGKTGGRGIKGQKSR) are disordered. Positions 23-35 (IGSGKGKTGGRGI) are enriched in gly residues.

This sequence belongs to the universal ribosomal protein uL15 family. Part of the 50S ribosomal subunit.

Its function is as follows. Binds to the 23S rRNA. In Rickettsia massiliae (strain Mtu5), this protein is Large ribosomal subunit protein uL15.